Here is a 328-residue protein sequence, read N- to C-terminus: UPF0421 protein SE_1574 (328 aa).

4 helical membrane-spanning segments follow: residues 26 to 46, 61 to 81, 109 to 129, and 132 to 152; these read LFCM…IVTI, LPAT…FGDQ, AVLT…FNFF, and LLTA…ILPP.

It belongs to the UPF0421 family.

It is found in the cell membrane. The sequence is that of UPF0421 protein SE_1574 from Staphylococcus epidermidis (strain ATCC 12228 / FDA PCI 1200).